A 220-amino-acid polypeptide reads, in one-letter code: Zinc finger protein 36 (220 aa).

The C2H2-type 1 zinc finger occupies 73 to 95 (FRCTVCGKAFASYQALGGHKSSH). The disordered stretch occupies residues 90–134 (GHKSSHRKPPSPGDHYGAAAAAQQLASAGDSKEDSASSAAGSTGP). Residues 107-117 (AAAAAQQLASA) are compositionally biased toward low complexity. Residues 135 to 157 (HRCTICRRSFATGQALGGHKRCH) form a C2H2-type 2 zinc finger.

Probable transcription factor involved in abscisic acid (ABA) signaling. Required for the regulation of the cross-talk between NADPH oxidase, hydrogen peroxide and MAP kinase in ABA signaling. Regulates the expression of the NADPH oxidase genes RBOHB and RBOHE, and the MAPK genes MPK1, MPK4, MPK5, MPK7 and MPK14. Regulates ABA-induced hydrogen peroxide production and antioxidant defense. Required for tolerance to water stress and oxidative stress. This chain is Zinc finger protein 36, found in Oryza sativa subsp. japonica (Rice).